A 231-amino-acid polypeptide reads, in one-letter code: Ribonuclease 3 (231 aa).

Positions 5–134 constitute an RNase III domain; sequence QKKLKNDYGL…FLGALFIDQG (130 aa). Glutamate 47 contributes to the Mg(2+) binding site. Residue aspartate 51 is part of the active site. 2 residues coordinate Mg(2+): asparagine 120 and glutamate 123. Glutamate 123 is a catalytic residue. In terms of domain architecture, DRBM spans 160-229; that stretch reads DYKTELQEVL…AENAIKGQNH (70 aa).

This sequence belongs to the ribonuclease III family. Homodimer. Mg(2+) serves as cofactor.

The protein resides in the cytoplasm. It carries out the reaction Endonucleolytic cleavage to 5'-phosphomonoester.. In terms of biological role, digests double-stranded RNA. Involved in the processing of primary rRNA transcript to yield the immediate precursors to the large and small rRNAs (23S and 16S). Processes some mRNAs, and tRNAs when they are encoded in the rRNA operon. Processes pre-crRNA and tracrRNA of type II CRISPR loci if present in the organism. The protein is Ribonuclease 3 of Lactococcus lactis subsp. cremoris (strain MG1363).